Reading from the N-terminus, the 429-residue chain is Probable M18 family aminopeptidase 2 (429 aa).

Positions 82, 156, and 401 each coordinate Zn(2+).

The protein belongs to the peptidase M18 family. Zn(2+) serves as cofactor.

This Stutzerimonas stutzeri (strain A1501) (Pseudomonas stutzeri) protein is Probable M18 family aminopeptidase 2.